We begin with the raw amino-acid sequence, 373 residues long: Flagellar P-ring protein (373 aa).

The first 30 residues, 1-30 (MTNRWSFDVNKNLVTVLFTWLCLSISTAHA), serve as a signal peptide directing secretion.

The protein belongs to the FlgI family. The basal body constitutes a major portion of the flagellar organelle and consists of four rings (L,P,S, and M) mounted on a central rod.

It is found in the periplasm. It localises to the bacterial flagellum basal body. Functionally, assembles around the rod to form the L-ring and probably protects the motor/basal body from shearing forces during rotation. The polypeptide is Flagellar P-ring protein (Aliivibrio fischeri (strain ATCC 700601 / ES114) (Vibrio fischeri)).